Here is a 292-residue protein sequence, read N- to C-terminus: MPSPRRTIEGRPLGSSGGSSVPGSPAHGGGSGGGRFEFQSLLNCRAGADPACARLRASDSPVHRRGSFPLAASGPAQAAPAPPPEDARMNLNPSFLGIALRSLLAIDLWLSKKLGVCAGESSAWGSVRPLMKLLEISGHGIPWLLGTLYCLLRSDSWAGREVLMNLLFALLLDLLLVAVIKGLVRRRRPAHNQKDMFFTLSVDRYSFPSGHATRAALVSRFILNHLVLAIPLRVLVVLWAFVLGLSRVMLGRHNVTDVAFGFFLGYMQYSIVDYCWLSPHNVPVLFVLWNQQ.

Disordered stretches follow at residues 1-34 (MPSP…SGGG) and 66-86 (GSFP…PPED). The Cytoplasmic portion of the chain corresponds to 1 to 131 (MPSPRRTIEG…SAWGSVRPLM (131 aa)). The span at 10-25 (GRPLGSSGGSSVPGSP) shows a compositional bias: low complexity. A phosphoserine mark is found at Ser24 and Ser67. Positions 69-79 (PLAASGPAQAA) are enriched in low complexity. A helical membrane pass occupies residues 132–152 (KLLEISGHGIPWLLGTLYCLL). Over 153–161 (RSDSWAGRE) the chain is Lumenal. A helical transmembrane segment spans residues 162–182 (VLMNLLFALLLDLLLVAVIKG). The tract at residues 181–189 (KGLVRRRRP) is phosphatase sequence motif I. Residues 183 to 225 (LVRRRRPAHNQKDMFFTLSVDRYSFPSGHATRAALVSRFILNH) are Cytoplasmic-facing. The interval 208-211 (PSGH) is phosphatase sequence motif II. The active-site Proton donors is the His211. A helical membrane pass occupies residues 226–246 (LVLAIPLRVLVVLWAFVLGLS). The tract at residues 246 to 257 (SRVMLGRHNVTD) is phosphatase sequence motif III. At 247–257 (RVMLGRHNVTD) the chain is on the lumenal side. The Nucleophile role is filled by His253. The chain crosses the membrane as a helical span at residues 258–278 (VAFGFFLGYMQYSIVDYCWLS). Residues 279-292 (PHNVPVLFVLWNQQ) lie on the Cytoplasmic side of the membrane.

This sequence belongs to the PA-phosphatase related phosphoesterase family. Post-translationally, phosphorylation by PKC activates the phosphatase activity towards presqualene diphosphate.

The protein resides in the endoplasmic reticulum membrane. It localises to the nucleus envelope. The protein localises to the nucleus inner membrane. It catalyses the reaction presqualene diphosphate + H2O = presqualene phosphate + phosphate + H(+). The enzyme catalyses presqualene phosphate + H2O = presqualene alcohol + phosphate. It carries out the reaction (2E,6E)-farnesyl diphosphate + H2O = (2E,6E)-farnesyl phosphate + phosphate + H(+). The catalysed reaction is (2E,6E)-farnesyl phosphate + H2O = (2E,6E)-farnesol + phosphate. It catalyses the reaction (2E,6E,10E)-geranylgeranyl diphosphate + H2O = (2E,6E,10E)-geranylgeranyl phosphate + phosphate + H(+). The enzyme catalyses (2E,6E,10E)-geranylgeranyl phosphate + H2O = (2E,6E,10E)-geranylgeraniol + phosphate. It carries out the reaction (2E)-geranyl diphosphate + H2O = (2E)-geranyl phosphate + phosphate + H(+). The catalysed reaction is (2E)-geranyl phosphate + H2O = (2E)-geraniol + phosphate. It catalyses the reaction 1,2-dihexadecanoyl-sn-glycero-3-phosphate + H2O = 1,2-dihexadecanoyl-sn-glycerol + phosphate. In terms of biological role, magnesium-independent polyisoprenoid diphosphatase that catalyzes the sequential dephosphorylation of presqualene, farnesyl, geranyl and geranylgeranyl diphosphates. Functions in the innate immune response through the dephosphorylation of presqualene diphosphate which acts as a potent inhibitor of the signaling pathways contributing to polymorphonuclear neutrophils activation. May regulate the biosynthesis of cholesterol and related sterols by dephosphorylating presqualene and farnesyl diphosphate, two key intermediates in this biosynthetic pathway. May also play a role in protein prenylation by acting on farnesyl diphosphate and its derivative geranylgeranyl diphosphate, two precursors for the addition of isoprenoid anchors to membrane proteins. Has a lower activity towards phosphatidic acid (PA), but through phosphatidic acid dephosphorylation may participate in the biosynthesis of phospholipids and triacylglycerols. May also act on ceramide-1-P, lysophosphatidic acid (LPA) and sphing-4-enine 1-phosphate/sphingosine-1-phosphate. The protein is Polyisoprenoid diphosphate/phosphate phosphohydrolase PLPP6 of Mus musculus (Mouse).